The chain runs to 37 residues: Ice-structuring protein 3 (37 aa).

Belongs to the type-I AFP family.

Contributes to protect fish blood from freezing at subzero sea water temperatures. Lowers the blood freezing point. Binds to nascent ice crystals and prevents further growth. The polypeptide is Ice-structuring protein 3 (Pseudopleuronectes americanus (Winter flounder)).